Consider the following 105-residue polypeptide: Nucleoid-associated protein TTHA1599 (105 aa).

This sequence belongs to the YbaB/EbfC family. In terms of assembly, homodimer.

It localises to the cytoplasm. The protein resides in the nucleoid. Its function is as follows. Binds to DNA and alters its conformation. May be involved in regulation of gene expression, nucleoid organization and DNA protection. In Thermus thermophilus (strain ATCC 27634 / DSM 579 / HB8), this protein is Nucleoid-associated protein TTHA1599.